The primary structure comprises 221 residues: MKTRVVLILALSVCIEAASEVIRARAYIFKAEAGKIPTELIGTIDFDQSGSFLKLNGSVSGLAAGKHGFHIHEKGDTGNGCLSAGGHYNPHKLSHGAPDDSNRHIGDLGNIESPASGDTLISVSDSLASLSGQYSIIGRSVVIHEKTDDLGRGTSDQSKTTGNAGSRLACGTIGTVEERILETTTASLPPVTQSQPIGSSSYYYSTFYLPIILYFLLSRIL.

Positions 1-19 (MKTRVVLILALSVCIEAAS) are cleaved as a signal peptide. N-linked (GlcNAc...) asparagine glycosylation is present at Asn56. Cu cation-binding residues include His70, His72, and His87. Residues Cys81 and Cys170 are joined by a disulfide bond. The Zn(2+) site is built by His87, His95, His104, and Asp107. Position 144 (His144) interacts with Cu cation.

Belongs to the Cu-Zn superoxide dismutase family. Cu cation is required as a cofactor. It depends on Zn(2+) as a cofactor. In terms of tissue distribution, isoform 2 is preferentially expressed in eggs.

It is found in the secreted. The protein resides in the extracellular space. Its subcellular location is the membrane. It carries out the reaction 2 superoxide + 2 H(+) = H2O2 + O2. In terms of biological role, protects cells against oxidative stress by converting superoxide radicals to hydrogen peroxide. Oxidative stress is involved in various biological dysfunctions and senescence. This chain is Extracellular superoxide dismutase [Cu-Zn] (sod-4), found in Caenorhabditis elegans.